The following is a 470-amino-acid chain: ATP synthase subunit beta 2 (470 aa).

155 to 162 (GGAGVGKT) is a binding site for ATP.

Belongs to the ATPase alpha/beta chains family. As to quaternary structure, F-type ATPases have 2 components, CF(1) - the catalytic core - and CF(0) - the membrane proton channel. CF(1) has five subunits: alpha(3), beta(3), gamma(1), delta(1), epsilon(1). CF(0) has three main subunits: a(1), b(2) and c(9-12). The alpha and beta chains form an alternating ring which encloses part of the gamma chain. CF(1) is attached to CF(0) by a central stalk formed by the gamma and epsilon chains, while a peripheral stalk is formed by the delta and b chains.

The protein resides in the cell inner membrane. The catalysed reaction is ATP + H2O + 4 H(+)(in) = ADP + phosphate + 5 H(+)(out). Produces ATP from ADP in the presence of a proton gradient across the membrane. The catalytic sites are hosted primarily by the beta subunits. This is ATP synthase subunit beta 2 from Nitrosospira multiformis (strain ATCC 25196 / NCIMB 11849 / C 71).